A 356-amino-acid polypeptide reads, in one-letter code: UDP-N-acetylglucosamine--N-acetylmuramyl-(pentapeptide) pyrophosphoryl-undecaprenol N-acetylglucosamine transferase (356 aa).

UDP-N-acetyl-alpha-D-glucosamine contacts are provided by residues 12–14 (TGG), Asn-124, Arg-163, Ser-188, Ile-242, 261–266 (ALTVSE), and Gln-287.

Belongs to the glycosyltransferase 28 family. MurG subfamily.

Its subcellular location is the cell inner membrane. The catalysed reaction is di-trans,octa-cis-undecaprenyl diphospho-N-acetyl-alpha-D-muramoyl-L-alanyl-D-glutamyl-meso-2,6-diaminopimeloyl-D-alanyl-D-alanine + UDP-N-acetyl-alpha-D-glucosamine = di-trans,octa-cis-undecaprenyl diphospho-[N-acetyl-alpha-D-glucosaminyl-(1-&gt;4)]-N-acetyl-alpha-D-muramoyl-L-alanyl-D-glutamyl-meso-2,6-diaminopimeloyl-D-alanyl-D-alanine + UDP + H(+). It participates in cell wall biogenesis; peptidoglycan biosynthesis. Cell wall formation. Catalyzes the transfer of a GlcNAc subunit on undecaprenyl-pyrophosphoryl-MurNAc-pentapeptide (lipid intermediate I) to form undecaprenyl-pyrophosphoryl-MurNAc-(pentapeptide)GlcNAc (lipid intermediate II). This is UDP-N-acetylglucosamine--N-acetylmuramyl-(pentapeptide) pyrophosphoryl-undecaprenol N-acetylglucosamine transferase from Azotobacter vinelandii (strain DJ / ATCC BAA-1303).